The following is a 262-amino-acid chain: Intercellular adhesion molecule 4 (262 aa).

Residues 1–22 (MESALLLPSLLLVAAYPRGGSP) form the signal peptide. Over 23–231 (QQEWMQSPPA…LTVLALSPAS (209 aa)) the chain is Extracellular. Ig-like C2-type domains lie at 54-116 (GGSA…TREA) and 138-209 (GHKY…LNLD). N-linked (GlcNAc...) asparagine glycans are attached at residues N60, N84, and N182. Intrachain disulfides connect C61-C105, C61-C109, C65-C109, and C145-C202. A helical membrane pass occupies residues 232 to 252 (IALASTSIATLVGILLAVGAV). Residues 253 to 262 (YVRKYLAVQT) are Cytoplasmic-facing.

It belongs to the immunoglobulin superfamily. ICAM family.

The protein resides in the cell membrane. It is found in the secreted. In terms of biological role, adhesion molecule that binds to leukocyte adhesion LFA-1 protein LFA-1 (integrin alpha-L/beta-2). ICAM4 is also a ligand for alpha-4/beta-1 and alpha-V integrins. Isoform 2 may modulate binding of membrane-associated ICAM4. This Mus musculus (Mouse) protein is Intercellular adhesion molecule 4 (Icam4).